An 845-amino-acid chain; its full sequence is Beta-mannosidase B (845 aa).

Asparagine 252 is a glycosylation site (N-linked (GlcNAc...) asparagine). Glutamate 432 functions as the Proton donor in the catalytic mechanism. N-linked (GlcNAc...) asparagine glycans are attached at residues asparagine 717 and asparagine 723.

It belongs to the glycosyl hydrolase 2 family. Beta-mannosidase B subfamily.

The enzyme catalyses Hydrolysis of terminal, non-reducing beta-D-mannose residues in beta-D-mannosides.. It functions in the pathway glycan metabolism; N-glycan degradation. Its function is as follows. Exoglycosidase that cleaves the single beta-linked mannose residue from the non-reducing end of beta-mannosidic oligosaccharides of various complexity and length. Prefers mannobiose over mannotriose and has no activity against polymeric mannan. Is also severely restricted by galactosyl substitutions at the +1 subsite. The polypeptide is Beta-mannosidase B (mndB) (Aspergillus fumigatus (strain CBS 144.89 / FGSC A1163 / CEA10) (Neosartorya fumigata)).